The sequence spans 367 residues: MNRLALYCRQGFEKECAAEITAKAAELEVFGFARVKDNSGYVLFECYQPDDADRLAKEIPFRELIFARQILVVGELLRDLPPEDRVSPIVGMLIGVVDRGGELRVEVPDTNESKELLKFCRKLTVPLRTAMREQKVLMARENKTRPVVHVFFIAPGCCYVGYSFSNNNSPFYMGIPRLKFPSDAPSRSTLKLEEAFHVFIPADEWDERLASGMHAVDLGACPGGWTYQLVQRSMMVHAVDNGPMAPSLMDTGQVTHHRADGFRYEPSSSKIYWLVCDMVEKPAKVTSLMIQWLVKGWCREAIFNLKLPMKKRYEEVSQNLLAIKEALDTAGISSEIHAKQLYHDREEVTVHVRRMWSAVAGRRDERD.

Residues Ser188, 221–224 (CPGG), Asp240, Asp260, and Asp277 each bind S-adenosyl-L-methionine. Catalysis depends on Lys306, which acts as the Proton acceptor.

It belongs to the class I-like SAM-binding methyltransferase superfamily. RNA methyltransferase RlmE family. RlmM subfamily. In terms of assembly, monomer.

It localises to the cytoplasm. It catalyses the reaction cytidine(2498) in 23S rRNA + S-adenosyl-L-methionine = 2'-O-methylcytidine(2498) in 23S rRNA + S-adenosyl-L-homocysteine + H(+). Its function is as follows. Catalyzes the 2'-O-methylation at nucleotide C2498 in 23S rRNA. The polypeptide is Ribosomal RNA large subunit methyltransferase M (Serratia proteamaculans (strain 568)).